Consider the following 155-residue polypeptide: RNA pyrophosphohydrolase (155 aa).

In terms of domain architecture, Nudix hydrolase spans 6–148 (GYRANVAIVL…KQEVYRKALT (143 aa)). The short motif at 38-59 (GGVDTGETPLQAMYRELHEEIG) is the Nudix box element.

The protein belongs to the Nudix hydrolase family. RppH subfamily. The cofactor is a divalent metal cation.

In terms of biological role, accelerates the degradation of transcripts by removing pyrophosphate from the 5'-end of triphosphorylated RNA, leading to a more labile monophosphorylated state that can stimulate subsequent ribonuclease cleavage. This is RNA pyrophosphohydrolase from Francisella tularensis subsp. mediasiatica (strain FSC147).